Here is a 184-residue protein sequence, read N- to C-terminus: Endothelial cell-specific molecule 1 (184 aa).

The first 21 residues, 1-21 (MKSLLLLTTLLVPLHLGMAWS), serve as a signal peptide directing secretion. Positions 24 to 102 (YAVDCPEHCD…GDEFGICKDC (79 aa)) constitute an IGFBP N-terminal domain. Intrachain disulfides connect cysteine 28/cysteine 51, cysteine 32/cysteine 53, cysteine 37/cysteine 54, cysteine 43/cysteine 57, cysteine 65/cysteine 83, and cysteine 77/cysteine 99. The segment at 145–184 (RTSASHTERDSASGDGNAVREEIGEGNAARPSVMKWLNPR) is disordered. The segment covering 150–167 (HTERDSASGDGNAVREEI) has biased composition (basic and acidic residues). Serine 157 carries an O-linked (Xyl...) (chondroitin sulfate) serine glycan.

O-glycosylated; contains chondroitin sulfate and dermatan sulfate.

It is found in the secreted. In terms of biological role, involved in angiogenesis; promotes angiogenic sprouting. May have potent implications in lung endothelial cell-leukocyte interactions. The protein is Endothelial cell-specific molecule 1 (Esm1) of Mus musculus (Mouse).